The primary structure comprises 146 residues: Snaclec coagulation factor IX/factor X-binding protein subunit B (146 aa).

The first 23 residues, 1–23 (MGRFIFLSFGLLVVFLSLSGTGA), serve as a signal peptide directing secretion. 3 disulfide bridges follow: cysteine 25–cysteine 36, cysteine 53–cysteine 142, and cysteine 119–cysteine 134. One can recognise a C-type lectin domain in the interval 32-143 (YEGHCYKPFN…CRMEAYFVCE (112 aa)). Serine 64 and glutamate 70 together coordinate Ca(2+). Residue glutamate 143 coordinates Ca(2+).

Belongs to the snaclec family. In terms of assembly, heterodimer with subunit A of IX/X-bp or IX-bp; disulfide-linked. Expressed by the venom gland.

The protein localises to the secreted. Its function is as follows. When linked to subunit A of IX/X-bp, anticoagulant protein which binds to the gamma-carboxyglutamic acid-domain regions of factors IX (F9) and factor X (F10) in the presence of calcium with a 1 to 1 stoichiometry. In terms of biological role, when linked to subunit A of IX-bp, anticoagulant protein which binds to the gamma-carboxyglutamic acid-domain regions of factor IX (but not to factor X) in the presence of calcium with a 1 to 1 stoichiometry. The polypeptide is Snaclec coagulation factor IX/factor X-binding protein subunit B (Gloydius halys (Chinese water mocassin)).